We begin with the raw amino-acid sequence, 437 residues long: Ribosomal protein uS12 methylthiotransferase RimO (437 aa).

Residues 4–114 (PRVSFVSLGC…VMSAVHEAVP (111 aa)) form the MTTase N-terminal domain. Positions 13, 49, 78, 145, 149, and 152 each coordinate [4Fe-4S] cluster. Residues 131–369 (LTPRHYAYLK…MAKQQQISTN (239 aa)) form the Radical SAM core domain. In terms of domain architecture, TRAM spans 372-437 (KKKVGKRLPV…DAYDLHGIAV (66 aa)).

It belongs to the methylthiotransferase family. RimO subfamily. The cofactor is [4Fe-4S] cluster.

It is found in the cytoplasm. The catalysed reaction is L-aspartate(89)-[ribosomal protein uS12]-hydrogen + (sulfur carrier)-SH + AH2 + 2 S-adenosyl-L-methionine = 3-methylsulfanyl-L-aspartate(89)-[ribosomal protein uS12]-hydrogen + (sulfur carrier)-H + 5'-deoxyadenosine + L-methionine + A + S-adenosyl-L-homocysteine + 2 H(+). Its function is as follows. Catalyzes the methylthiolation of an aspartic acid residue of ribosomal protein uS12. The protein is Ribosomal protein uS12 methylthiotransferase RimO of Brucella anthropi (strain ATCC 49188 / DSM 6882 / CCUG 24695 / JCM 21032 / LMG 3331 / NBRC 15819 / NCTC 12168 / Alc 37) (Ochrobactrum anthropi).